The primary structure comprises 355 residues: Small ribosomal subunit protein uS2 (355 aa).

Belongs to the universal ribosomal protein uS2 family.

This chain is Small ribosomal subunit protein uS2, found in Methylorubrum extorquens (strain CM4 / NCIMB 13688) (Methylobacterium extorquens).